The sequence spans 135 residues: MADNFNFELVSPERLLLSEMVTEVVIPATEGEMTVMANHAPTMTTIKPGVVSVRSASGKKQDYVVFGGFADILPTGCTLLAESAVPVEELQKDELTRRIEAARQELEHAELHEHKSKLEHFIMEMTHLRGVVEQD.

The protein belongs to the ATPase epsilon chain family. In terms of assembly, F-type ATPases have 2 components, CF(1) - the catalytic core - and CF(0) - the membrane proton channel. CF(1) has five subunits: alpha(3), beta(3), gamma(1), delta(1), epsilon(1). CF(0) has three main subunits: a, b and c.

The protein resides in the cell inner membrane. Functionally, produces ATP from ADP in the presence of a proton gradient across the membrane. In Rhizobium johnstonii (strain DSM 114642 / LMG 32736 / 3841) (Rhizobium leguminosarum bv. viciae), this protein is ATP synthase epsilon chain.